A 67-amino-acid chain; its full sequence is MGMRMMFTVFLLVVLATTVVSFTSDRTSDGRNAAFNAFDLIALTARQNCCNVPGCWAKYKHLCGRKR.

An N-terminal signal peptide occupies residues 1-21 (MGMRMMFTVFLLVVLATTVVS). Positions 22-46 (FTSDRTSDGRNAAFNAFDLIALTAR) are excised as a propeptide. Gln-47 bears the Pyrrolidone carboxylic acid mark. 2 disulfides stabilise this stretch: Cys-49-Cys-55 and Cys-50-Cys-63. The interval 51–53 (NVP) is lacks the Ser-Xaa-Pro motif that is crucial for potent interaction with nAChR. Cys-63 is modified (cysteine amide).

Belongs to the conotoxin A superfamily. In terms of tissue distribution, expressed by the venom duct.

Its subcellular location is the secreted. Functionally, alpha-conotoxins act on postsynaptic membranes, they bind to the nicotinic acetylcholine receptors (nAChR) and thus inhibit them. Has possibly a distinct nAChR binding mode from other alpha-conotoxins, due to a different three residue motif (lacks the Ser-Xaa-Pro motif). The polypeptide is Alpha-conotoxin-like Pu1.1 (Conus pulicarius (Flea-bitten cone)).